The following is a 568-amino-acid chain: Vacuolar protein 8 (568 aa).

Residue Gly-2 is the site of N-myristoyl glycine attachment. 3 S-palmitoyl cysteine lipidation sites follow: Cys-4, Cys-5, and Cys-7. 9 ARM repeats span residues 37–74, 75–114, 116–155, 157–196, 198–237, 241–280, 282–321, 323–363, and 407–446; these read DKDNYDFYSGGPLKALTTLVYSDNLNLQRSAALAFAEI, TEKYVRPVDREVLEPILILLQSHDPQIQIAACAALGNLAV, NENKILIVEMGGLEPLIEQMKSNNVEVQCNAVGCITNLAT, DDNKAKIAHSGALVPLTKLAKSKNIRVQRNATGALLNMTH, GENRKELVDAGAVPVLVSLLSSSDADVQYYCTTALSNIAV, NRRKLSQTEPRLVSKLVVLTDSPSARVKCQATLALRNLAS, TGYQLEIVRAGGLSHLVKLIQCNSMPLVLASVACIRNISI, PLNE…NLAA, and DNSKLELLDANILEALIPMTFSTNQEVAGNAAAALANLCS.

It belongs to the beta-catenin family.

The protein resides in the vacuole membrane. Functionally, functions in both vacuole inheritance and protein targeting from the cytoplasm to vacuole. The sequence is that of Vacuolar protein 8 (VAC8) from Eremothecium gossypii (strain ATCC 10895 / CBS 109.51 / FGSC 9923 / NRRL Y-1056) (Yeast).